The chain runs to 236 residues: GCN5-related N-acetyltransferase 8 (236 aa).

An N-acetyltransferase domain is found at 96 to 235 (ATITSSPSPD…DALEAFDQVN (140 aa)). Acetyl-CoA contacts are provided by residues 161-163 (IFV), 169-174 (RKGFGS), 200-202 (NVN), and tyrosine 207. The active-site Proton donor is tyrosine 207.

The protein belongs to the acetyltransferase family. GNAT subfamily. In terms of assembly, oligomer. As to expression, expressed throughout the plant.

The protein resides in the cytoplasm. Its subcellular location is the nucleus. It catalyses the reaction an N-terminal L-alpha-aminoacyl-[protein] + acetyl-CoA = N-terminal N(alpha)-acetyl-L-alpha-aminoacyl-[protein] + CoA + H(+). The catalysed reaction is L-lysyl-[protein] + acetyl-CoA = N(6)-acetyl-L-lysyl-[protein] + CoA + H(+). Functionally, probable protein acetyltransferase with dual specificity triggering both N-alpha-acetylation (NTA) and epsilon-lysine acetylation (KA). This chain is GCN5-related N-acetyltransferase 8, found in Arabidopsis thaliana (Mouse-ear cress).